A 112-amino-acid chain; its full sequence is MLRKLPINFAKWTVKKVPVQQKRFNSQQKEISPHIMFYKNYARPLGKVTLFALATYYGLEIVWWKLDASEQEAIKNSKLLICESSFSLLTFRRITEFRECEIKTRDLYDPEI.

A mitochondrion-targeting transit peptide spans 1-24 (MLRKLPINFAKWTVKKVPVQQKRF). Residues 25–44 (NSQQKEISPHIMFYKNYARP) lie on the Mitochondrial matrix side of the membrane. The chain crosses the membrane as a helical span at residues 45–62 (LGKVTLFALATYYGLEIV). Residues 63–112 (WWKLDASEQEAIKNSKLLICESSFSLLTFRRITEFRECEIKTRDLYDPEI) are Mitochondrial intermembrane-facing.

Belongs to the INA17 family. Component of the inner membrane assembly (INA) complex. Interacts with a subset of F(1)F(0)-ATP synthase subunits of the F(1)-domain and the peripheral stalk.

The protein localises to the mitochondrion inner membrane. In terms of biological role, component of the INA complex (INAC) that promotes the biogenesis of mitochondrial F(1)F(0)-ATP synthase. INAC facilitates the assembly of the peripheral stalk and promotes the assembly of the catalytic F(1)-domain with the membrane-embedded F(0)-domain. In Schizosaccharomyces pombe (strain 972 / ATCC 24843) (Fission yeast), this protein is Inner membrane assembly complex subunit 17.